The chain runs to 157 residues: Endoribonuclease YbeY (157 aa).

Zn(2+) is bound by residues H114, H118, and H124.

Belongs to the endoribonuclease YbeY family. The cofactor is Zn(2+).

It localises to the cytoplasm. In terms of biological role, single strand-specific metallo-endoribonuclease involved in late-stage 70S ribosome quality control and in maturation of the 3' terminus of the 16S rRNA. The polypeptide is Endoribonuclease YbeY (Yersinia pseudotuberculosis serotype O:1b (strain IP 31758)).